A 297-amino-acid chain; its full sequence is Coiled-coil domain-containing protein 196 (297 aa).

Positions 83 to 117 form a coiled coil; the sequence is ESSVMELLKEAEEMKQNLERKNKMLRKEMEMLWNK. The disordered stretch occupies residues 122 to 161; it reads EELSDQQKAPQTKNKADLQDGKAPKSPSSPRKTESELEKS. Composition is skewed to basic and acidic residues over residues 135-144 and 152-161; these read NKADLQDGKA and RKTESELEKS.

The sequence is that of Coiled-coil domain-containing protein 196 from Homo sapiens (Human).